Reading from the N-terminus, the 113-residue chain is UPF0145 protein MTH_544 (113 aa).

The protein belongs to the UPF0145 family.

The protein is UPF0145 protein MTH_544 of Methanothermobacter thermautotrophicus (strain ATCC 29096 / DSM 1053 / JCM 10044 / NBRC 100330 / Delta H) (Methanobacterium thermoautotrophicum).